Reading from the N-terminus, the 370-residue chain is Mesoderm posterior protein 2 (370 aa).

Disordered stretches follow at residues 51–89, 231–265, and 325–350; these read PSQP…EREK, SLER…HWTQ, and TSED…GLQL. Low complexity predominate over residues 57-77; it reads PARSTRTTQATAPRRTRPAPA. The bHLH domain maps to 79–133; sequence GQRQSASEREKLRMRTLARALQELRRFLPPSVAPAGQSLTKIETLRLAIRYIGHL. Residues 325–334 show a composition bias toward polar residues; it reads TSEDQGSSPA. The tract at residues 326–330 is may contain a degradation domain; the sequence is SEDQG.

Degraded by the proteasome. Post-translationally, phosphorylated.

It is found in the nucleus. In terms of biological role, transcription factor with important role in somitogenesis. Defines the rostrocaudal patterning of the somite by participating in distinct Notch pathways. Also regulates the FGF signaling pathway. Specifies the rostral half of the somites. Generates rostro-caudal polarity of somites by down-regulating in the presumptive rostral domain DLL1, a Notch ligand. Participates in the segment border formation by activating in the anterior presomitic mesoderm LFNG, a negative regulator of DLL1-Notch signaling. Acts as a strong suppressor of Notch activity. Together with MESP1 is involved in the epithelialization of somitic mesoderm and in the development of cardiac mesoderm. May play a role with Tcf15 in the differentiation of myotomal and sclerotomal cells by regulating Pax family genes. Also controls the expression of the protocadherin PCDH8/PAPC, EPHA4, RIPPLY2, NOTCH2, FGFR1, and CER1. Binds to the E-boxes within the EPH4A and RIPPLY2 enhancers. The polypeptide is Mesoderm posterior protein 2 (Mesp2) (Mus musculus (Mouse)).